The primary structure comprises 196 residues: Imidazoleglycerol-phosphate dehydratase (196 aa).

The protein belongs to the imidazoleglycerol-phosphate dehydratase family.

It localises to the cytoplasm. The enzyme catalyses D-erythro-1-(imidazol-4-yl)glycerol 3-phosphate = 3-(imidazol-4-yl)-2-oxopropyl phosphate + H2O. It functions in the pathway amino-acid biosynthesis; L-histidine biosynthesis; L-histidine from 5-phospho-alpha-D-ribose 1-diphosphate: step 6/9. The chain is Imidazoleglycerol-phosphate dehydratase from Moorella thermoacetica (strain ATCC 39073 / JCM 9320).